The sequence spans 591 residues: MSFVIAQPEMIAAAAGELASIRSAINAANAAAAAQTTGVMSAAADEVSTAVAALFSSHAQAYQAASAQAAAFHAQVVRTLTVDAGAYASAEAANAGPNMLAAVNAPAQALLGRPLIGNGANGAPGTGQAGGDGGLLFGNGGNGGSGAPGQAGGAGGAAGFFGNGGNGGDGGAGANGGAGGTAGWFFGFGGNGGAGGIGVAGINGGLGGAGGDGGNAGFFGNGGNGGMGGAGAAGVNAVNPGLATPVTPAANGGNGLNLVGVPGTAGGGADGANGSAIGQAGGAGGDGGNASTSGGIGIAQTGGAGGAGGAGGDGAPGGNGGNGGSVEHTGATGSSASGGNGATGGNGGVGAPGGAGGNGGHVSGGSVNTAGAGGKGGNGGTGGAGGPGGHGGSVLSGPVGDSGNGGAGGDGGAGVSATDIAGTGGRGGNGGHGGLWIGNGGDGGAGGVGGVGGAGAAGAIGGHGGDGGSVNTPIGGSEAGDGGKGGLGGDGGGRGIFGQFGAGGAGGAGGVGGAGGAGGTGGGGGNGGAIFNAGTPGAAGTGGDGGVGGTGAAGGKGGAGGSGGVNGATGADGAKGLDGATGGKGNNGNPG.

Positions 1–93 constitute a PE domain; it reads MSFVIAQPEM…AGAYASAEAA (93 aa). Positions 94-591 are PGRS; sequence NAGPNMLAAV…GGKGNNGNPG (498 aa). 6 stretches are compositionally biased toward gly residues: residues 303–324, 336–363, 371–412, 477–491, 539–567, and 579–591; these read GAGG…GNGG, ASGG…GHVS, GAGG…GDGG, SEAG…GGDG, AGTG…GVNG, and GATG…GNPG. Disordered regions lie at residues 303–412, 468–491, and 539–591; these read GAGG…GDGG, GSVN…GGDG, and AGTG…GNPG.

This sequence belongs to the mycobacterial PE family. PGRS subfamily. Interacts with human TLR4.

It is found in the host endoplasmic reticulum. In terms of biological role, involved in endoplasmic reticulum (ER) stress-mediated apoptosis through human Toll-like receptor 4 (TLR4) signaling pathway. Localizes to the host ER, leading to ER stress, disruption of intracellular Ca(2+) homeostasis and increase of nitric oxide (NO) and reactive oxygen species (ROS) levels. Stress response results in caspase-8 activation and apoptosis of macrophage cells. Apoptosis may lead to dissemination of the bacteria, thereby spreading the disease. This is PE-PGRS family protein PE_PGRS5 from Mycobacterium tuberculosis (strain ATCC 25618 / H37Rv).